Reading from the N-terminus, the 526-residue chain is ATP synthase subunit alpha (526 aa).

171 to 178 (GDRQTGKT) serves as a coordination point for ATP.

The protein belongs to the ATPase alpha/beta chains family. In terms of assembly, F-type ATPases have 2 components, CF(1) - the catalytic core - and CF(0) - the membrane proton channel. CF(1) has five subunits: alpha(3), beta(3), gamma(1), delta(1), epsilon(1). CF(0) has four main subunits: a, b, b' and c.

It localises to the cell inner membrane. The catalysed reaction is ATP + H2O + 4 H(+)(in) = ADP + phosphate + 5 H(+)(out). Its function is as follows. Produces ATP from ADP in the presence of a proton gradient across the membrane. The alpha chain is a regulatory subunit. The protein is ATP synthase subunit alpha of Chlorobium limicola (strain DSM 245 / NBRC 103803 / 6330).